Consider the following 438-residue polypeptide: Enolase (438 aa).

Gln-164 provides a ligand contact to (2R)-2-phosphoglycerate. Glu-206 acts as the Proton donor in catalysis. Residues Asp-243, Glu-289, and Asp-316 each coordinate Mg(2+). 4 residues coordinate (2R)-2-phosphoglycerate: Lys-341, Arg-370, Ser-371, and Lys-392. Catalysis depends on Lys-341, which acts as the Proton acceptor.

It belongs to the enolase family. Mg(2+) serves as cofactor.

It is found in the cytoplasm. Its subcellular location is the secreted. The protein localises to the cell surface. It catalyses the reaction (2R)-2-phosphoglycerate = phosphoenolpyruvate + H2O. The protein operates within carbohydrate degradation; glycolysis; pyruvate from D-glyceraldehyde 3-phosphate: step 4/5. Functionally, catalyzes the reversible conversion of 2-phosphoglycerate (2-PG) into phosphoenolpyruvate (PEP). It is essential for the degradation of carbohydrates via glycolysis. This is Enolase from Borrelia garinii subsp. bavariensis (strain ATCC BAA-2496 / DSM 23469 / PBi) (Borreliella bavariensis).